The chain runs to 95 residues: Large ribosomal subunit protein uL23 (95 aa).

Belongs to the universal ribosomal protein uL23 family. Part of the 50S ribosomal subunit. Contacts protein L29, and trigger factor when it is bound to the ribosome.

One of the early assembly proteins it binds 23S rRNA. One of the proteins that surrounds the polypeptide exit tunnel on the outside of the ribosome. Forms the main docking site for trigger factor binding to the ribosome. This is Large ribosomal subunit protein uL23 from Bacillus subtilis (strain 168).